Reading from the N-terminus, the 181-residue chain is MKSIAVTGYKNFELGIFKKDADEAVYIKETIKRHLLPLVEDGLEWVIISGQLGIELWAGDVVAELKEEYPIKLAILEPFEKQSANWNEANQLWANEVLEKADYHAFITKRPYESPAQFAARDGFIIDNTDGALLVYDLEKEGSPKFFYDRALQAKEQANYYLECIDFYALQEVVDDMNQTF.

It belongs to the UPF0398 family.

The protein is UPF0398 protein LMHCC_0668 of Listeria monocytogenes serotype 4a (strain HCC23).